We begin with the raw amino-acid sequence, 468 residues long: Secreted triacylglycerol lipase LIP2 (468 aa).

An N-terminal signal peptide occupies residues 1 to 22 (MFGFRLFILAAVALAYIQCAAA). Residues C125 and C295 are joined by a disulfide bond. The Nucleophile role is filled by S209. N-linked (GlcNAc...) asparagine glycosylation is found at N242, N252, and N279. Catalysis depends on residues D355 and H389.

It belongs to the AB hydrolase superfamily. Lipase family. Class Lip subfamily.

The protein resides in the secreted. It carries out the reaction a triacylglycerol + H2O = a diacylglycerol + a fatty acid + H(+). It catalyses the reaction a monoacylglycerol + H2O = glycerol + a fatty acid + H(+). The enzyme catalyses a diacylglycerol + H2O = a monoacylglycerol + a fatty acid + H(+). Its function is as follows. Secreted lipase that hydrolyzes acylglycerol lipids such as triacylglycerols and consequently releases free fatty acid. Due to an absence of fatty acid synthase genes in Malassezia species, secretory lipases are essential for the yeast to generate free fatty acids from degradation of sebum and assimilate them as lipid sources for growth. Plays important roles not only in lipid metabolism but also in the immune response of host cells and pathogenesis. This chain is Secreted triacylglycerol lipase LIP2, found in Malassezia furfur (Pityriasis versicolor infection agent).